Consider the following 196-residue polypeptide: Elongation factor Ts (196 aa).

Positions 80 to 83 are involved in Mg(2+) ion dislocation from EF-Tu; that stretch reads TDFV.

The protein belongs to the EF-Ts family.

The protein localises to the cytoplasm. Functionally, associates with the EF-Tu.GDP complex and induces the exchange of GDP to GTP. It remains bound to the aminoacyl-tRNA.EF-Tu.GTP complex up to the GTP hydrolysis stage on the ribosome. In Thermosipho melanesiensis (strain DSM 12029 / CIP 104789 / BI429), this protein is Elongation factor Ts.